A 629-amino-acid chain; its full sequence is Ionotropic receptor 75a (629 aa).

Over 1–335 (MQLVQLANFV…GDVFLQPFSP (335 aa)) the chain is Extracellular. N-linked (GlcNAc...) asparagine glycosylation is found at Asn61, Asn112, Asn126, Asn144, Asn166, and Asn232. Residues 336-356 (LVWYLFGGVLSLIGVLLWITF) traverse the membrane as a helical segment. At 357-374 (YMECKRMQKRWRLDYLPS) the chain is on the cytoplasmic side. A helical transmembrane segment spans residues 375–395 (LLSTFLISFGAACIQSSSLIP). The Extracellular portion of the chain corresponds to 396–402 (RSAGGRL). The helical transmembrane segment at 403–423 (IYFALFLISFIMYNYYTSVVV) threads the bilayer. The Cytoplasmic segment spans residues 424–592 (SSLLSSPVKS…NFVITVGMEY (169 aa)). A helical transmembrane segment spans residues 593-613 (VAPLLLMLICADILVVVILLV). At 614 to 629 (ELAWKRFFTRHLTFHP) the chain is on the extracellular side.

This sequence belongs to the glutamate-gated ion channel (TC 1.A.10.1) family. In terms of tissue distribution, expressed in acetic-acid-sensing neurons in the antennal coeloconic 2 (ac2) and antennal coeloconic 3 (ac3) sensilla class of sensory hairs (at protein level).

The protein localises to the cell membrane. The protein resides in the cell projection. Its subcellular location is the dendrite. Odorant receptor for acetic and propionic acid. Functions as part of an olfactory receptor complex including the ionotropic receptor coreceptor Ir8a. The chain is Ionotropic receptor 75a from Drosophila melanogaster (Fruit fly).